The primary structure comprises 305 residues: Ribosomal RNA small subunit methyltransferase H (305 aa).

S-adenosyl-L-methionine-binding positions include 33 to 35 (GGY), D51, F82, D96, and Q103.

The protein belongs to the methyltransferase superfamily. RsmH family.

It is found in the cytoplasm. The catalysed reaction is cytidine(1402) in 16S rRNA + S-adenosyl-L-methionine = N(4)-methylcytidine(1402) in 16S rRNA + S-adenosyl-L-homocysteine + H(+). Its function is as follows. Specifically methylates the N4 position of cytidine in position 1402 (C1402) of 16S rRNA. The protein is Ribosomal RNA small subunit methyltransferase H of Rickettsia bellii (strain OSU 85-389).